Consider the following 385-residue polypeptide: MCIYASRQTVCPYLTPFKVKRPKSREMNSSDVNFSLLQSQPNVPAEFFWPEKDVAPSEGDLDLPIIDLSGFLNGNEAETQLAAKAVKKACMAHGTFLVVNHGFKSGLAEKALEISSLFFGLSKDEKLRAYRIPGNISGYTAGHSQRFSSNLPWNETLTLAFKKGPPHVVEDFLTSRLGNHRQEIGQVFQEFCDAMNGLVMDLMELLGISMGLKDRTYYRRFFEDGSGIFRCNYYPPCKQPEKALGVGPHNDPTAITVLLQDDVVGLEVFAAGSWQTVRPRPGALVVNVGDTFMALSNGNYRSCYHRAVVNKEKVRRSLVFFSCPREDKIIVPPPELVEGEEASRKYPDFTWAQLQKFTQSGYRVDNTTLHNFSSWLVSNSDKKST.

The Fe2OG dioxygenase domain occupies 224–324 (DGSGIFRCNY…RRSLVFFSCP (101 aa)). Positions 249, 251, and 305 each coordinate Fe cation. The active site involves Arg315.

The protein belongs to the iron/ascorbate-dependent oxidoreductase family. GA20OX subfamily. The cofactor is Fe(2+). Requires L-ascorbate as cofactor. Expressed in 3-day-old seedlings and siliques. Detected in dry seeds, roots, old leaves and inflorescences.

The enzyme catalyses gibberellin A12 + 2 2-oxoglutarate + 3 O2 + H(+) = gibberellin A9 + 2 succinate + 3 CO2 + 2 H2O. It carries out the reaction gibberellin A53 + 2 2-oxoglutarate + 3 O2 + H(+) = gibberellin A20 + 2 succinate + 3 CO2 + 2 H2O. Its pathway is plant hormone biosynthesis; gibberellin biosynthesis. Key oxidase enzyme in the biosynthesis of gibberellin that catalyzes the conversion of GA12 and GA53 to GA9 and GA20 respectively, via a three-step oxidation at C-20 of the GA skeleton. This Arabidopsis thaliana (Mouse-ear cress) protein is Gibberellin 20 oxidase 5 (GA20OX5).